A 474-amino-acid polypeptide reads, in one-letter code: MAYIQLEPLNEGFLSRISGLLLCRWTCRHCCQKCYESSCCQSSEDEVEILGPFPAQTPPWLMASRSSDKDGDSVHTASEVPLTPRTNSPDGRRSSSDTSKSTYSLTRRISSLESRRPSSPLIDIKPIEFGVLSAKKEPIQPSVLRRTYNPDDYFRKFEPHLYSLDSNSDDVDSLTDEEILSKYQLGMLHFSTQYDLLHNHLTVRVIEARDLPPPISHDGSRQDMAHSNPYVKICLLPDQKNSKQTGVKRKTQKPVFEERYTFEIPFLEAQRRTLLLTVVDFDKFSRHCVIGKVSVPLCEVDLVKGGHWWKALIPSSQNEVELGELLLSLNYLPSAGRLNVDVIRAKQLLQTDVSQGSDPFVKIQLVHGLKLVKTKKTSFLRGTIDPFYNESFSFKVPQEELENASLVFTVFGHNMKSSNDFIGRIVIGQYSSGPSETNHWRRMLNTHRTAVEQWHSLRSRAECDRVSPASLEVT.

The disordered stretch occupies residues 60–112 (WLMASRSSDKDGDSVHTASEVPLTPRTNSPDGRRSSSDTSKSTYSLTRRISSL). Low complexity predominate over residues 96 to 112 (SDTSKSTYSLTRRISSL). Phosphoserine occurs at positions 118 and 119. C2 domains lie at 184–310 (QLGM…HWWK) and 321–455 (ELGE…EQWH).

The protein belongs to the synaptotagmin family. In terms of tissue distribution, expressed abundantly in brain (frontal and temporal lobes, hippocampus, hypothalamus, amygdala, substantia nigra, and pituitary), kidney, and prostate. Expressed in fetal brain, kidney and lung. Expressed in melanocytes.

The protein resides in the membrane. Functionally, plays a role in dendrite formation by melanocytes. The sequence is that of Synaptotagmin-17 (SYT17) from Homo sapiens (Human).